The following is a 197-amino-acid chain: Glycerol-3-phosphate acyltransferase (197 aa).

5 consecutive transmembrane segments (helical) span residues 7-27 (PSIA…LLLT), 56-76 (LAAL…WIAW), 82-102 (DIGW…WLGF), 116-136 (FGLG…MLAI), and 157-177 (YFGR…IIWL).

This sequence belongs to the PlsY family. As to quaternary structure, probably interacts with PlsX.

It localises to the cell inner membrane. The catalysed reaction is an acyl phosphate + sn-glycerol 3-phosphate = a 1-acyl-sn-glycero-3-phosphate + phosphate. It participates in lipid metabolism; phospholipid metabolism. In terms of biological role, catalyzes the transfer of an acyl group from acyl-phosphate (acyl-PO(4)) to glycerol-3-phosphate (G3P) to form lysophosphatidic acid (LPA). This enzyme utilizes acyl-phosphate as fatty acyl donor, but not acyl-CoA or acyl-ACP. The protein is Glycerol-3-phosphate acyltransferase of Erythrobacter litoralis (strain HTCC2594).